We begin with the raw amino-acid sequence, 581 residues long: Probable CDP-diacylglycerol--glycerol-3-phosphate 3-phosphatidyltransferase (581 aa).

Positions 27-65 (RSATTTTTTTTKACGNGSSQSPPSTPLLSSKSSTITSNK) are disordered. Low complexity predominate over residues 44–65 (SSQSPPSTPLLSSKSSTITSNK). Residue 160–167 (ASLYLGTS) coordinates ATP. PLD phosphodiesterase domains follow at residues 248 to 274 (TIGVQHIKTYIFDDDLLLSGANLSKDY) and 487 to 520 (DKWTYHAKGLWIQVKNQQHPSITLIGSPNFGSRS). Residues H253, K255, and D260 contribute to the active site.

It belongs to the CDP-alcohol phosphatidyltransferase class-II family.

It catalyses the reaction a CDP-1,2-diacyl-sn-glycerol + sn-glycerol 3-phosphate = a 1,2-diacyl-sn-glycero-3-phospho-(1'-sn-glycero-3'-phosphate) + CMP + H(+). It functions in the pathway phospholipid metabolism; phosphatidylglycerol biosynthesis; phosphatidylglycerol from CDP-diacylglycerol: step 1/2. In terms of biological role, functions in the biosynthesis of the anionic phospholipids phosphatidylglycerol and cardiolipin. This chain is Probable CDP-diacylglycerol--glycerol-3-phosphate 3-phosphatidyltransferase (pgs1), found in Dictyostelium discoideum (Social amoeba).